A 232-amino-acid polypeptide reads, in one-letter code: MAKITKKQKALAGKVDSNKLYPLADAIGIVKEAATAKFDESIDVAVQLGIDAKKSDQVVRGAVVLPNGTGKTKRVAVFAQGAKAEEAKAAGADIVGMDDLAAMVKAGDMPFDVVIAAPDAMRVVGTLGQILGPRGLMPNPKVGTVTPDVATAVKNAKAGQVQFRVDKAGIVHGTIGRRSFDNDKLQGNLAALIDALVKAKPATSKGVYLRKVAVSSTMGLGVRVDTQTIAAS.

It belongs to the universal ribosomal protein uL1 family. Part of the 50S ribosomal subunit.

Its function is as follows. Binds directly to 23S rRNA. The L1 stalk is quite mobile in the ribosome, and is involved in E site tRNA release. In terms of biological role, protein L1 is also a translational repressor protein, it controls the translation of the L11 operon by binding to its mRNA. The polypeptide is Large ribosomal subunit protein uL1 (Variovorax paradoxus (strain S110)).